A 274-amino-acid polypeptide reads, in one-letter code: Large ribosomal subunit protein uL2cz/uL2cy (274 aa).

Disordered regions lie at residues 1–21 and 224–252; these read MAIH…VDSQ and NPVD…GYPA.

This sequence belongs to the universal ribosomal protein uL2 family. As to quaternary structure, part of the 50S ribosomal subunit.

The protein resides in the plastid. Its subcellular location is the chloroplast. In Olimarabidopsis pumila (Dwarf rocket), this protein is Large ribosomal subunit protein uL2cz/uL2cy (rpl2-A).